Reading from the N-terminus, the 490-residue chain is Betaine aldehyde dehydrogenase (490 aa).

The K(+) site is built by I27 and D93. 150-152 (GAW) is a binding site for NAD(+). K162 functions as the Charge relay system in the catalytic mechanism. 176 to 179 (KPSE) is a binding site for NAD(+). V180 contacts K(+). An NAD(+)-binding site is contributed by 230-233 (GTDT). Position 246 (L246) interacts with K(+). The active-site Proton acceptor is E252. NAD(+) is bound by residues G254, C286, and E387. The active-site Nucleophile is C286. A Cysteine sulfenic acid (-SOH) modification is found at C286. Positions 457 and 460 each coordinate K(+). The Charge relay system role is filled by E464.

This sequence belongs to the aldehyde dehydrogenase family. In terms of assembly, dimer of dimers. The cofactor is K(+).

It catalyses the reaction betaine aldehyde + NAD(+) + H2O = glycine betaine + NADH + 2 H(+). Its pathway is amine and polyamine biosynthesis; betaine biosynthesis via choline pathway; betaine from betaine aldehyde: step 1/1. Involved in the biosynthesis of the osmoprotectant glycine betaine. Catalyzes the irreversible oxidation of betaine aldehyde to the corresponding acid. The sequence is that of Betaine aldehyde dehydrogenase from Pseudomonas fluorescens (strain SBW25).